A 967-amino-acid chain; its full sequence is Glutamate receptor 2.6 (967 aa).

A signal peptide spans 1-31 (MSLFNHLLSRALPLWLLFFINFLVLLGKSQQ). Residues 32 to 590 (EVLQVQVGIV…WVFLKPLTRE (559 aa)) are Extracellular-facing. N-linked (GlcNAc...) asparagine glycosylation is found at asparagine 45, asparagine 57, asparagine 121, asparagine 336, asparagine 345, asparagine 424, and asparagine 550. A helical transmembrane segment spans residues 591–611 (LWFLTAASFLYIGIMVWIFEY). At 612 to 621 (QASGDFRKQS) the chain is on the cytoplasmic side. Residues 622–642 (IINKISNVFYFSFSTLFFAHM) traverse the membrane as a helical segment. Topologically, residues 643–651 (RPSESIFTR) are cytoplasmic. Residues 652–672 (VLVVVWCFVLLILTQSYTATL) traverse the membrane as a helical segment. Residues 673-832 (TSMLTVQELR…DSPIRLDHHS (160 aa)) are Extracellular-facing. Asparagine 795 is a glycosylation site (N-linked (GlcNAc...) asparagine). Residues 833–853 (FEALFTIVFVVSMLLLLAMLV) form a helical membrane-spanning segment. Over 854–967 (CRRYRQESKS…AALFSRIKSA (114 aa)) the chain is Cytoplasmic. Residues 864–874 (GEINANNSPTD) show a composition bias toward polar residues. The disordered stretch occupies residues 864–913 (GEINANNSPTDGNMRAPPNQPTDDNMRAPTSPPIDDQVLEPPGPALNEAD).

It belongs to the glutamate-gated ion channel (TC 1.A.10.1) family. As to quaternary structure, may form heteromers. In terms of tissue distribution, expressed predominantly in roots.

The protein resides in the membrane. Its function is as follows. Glutamate-gated receptor that probably acts as a non-selective cation channel. May be involved in light-signal transduction and calcium homeostasis via the regulation of calcium influx into cells. In Arabidopsis thaliana (Mouse-ear cress), this protein is Glutamate receptor 2.6 (GLR2.6).